The primary structure comprises 267 residues: MAAMRLTLFRIVCLLPGCLALPLSQEAGEVTALQWEQAQNYLRKFYLHDSKTKKATSAVDKLREMQKFFGLPETGKLSPRVMEIMQKPRCGVPDVAEFSLMPNSPKWHSRTVTYRIVSYTTDLPRFLVDQIVKRALRMWSMQIPLNFKRVSWGTADIIIGFARGDHGDNFPFDGPGNTLGHAFAPGPGLGGDAHFDKDEYWTDGEDSGVNFLFVATHELGHSLGLGHSSVPSSVMYPTYQGDHSEDFSLTKDDIAGIQKLYGKRNKL.

Positions 1 to 20 are cleaved as a signal peptide; it reads MAAMRLTLFRIVCLLPGCLA. The propeptide at 21 to 97 is activation peptide; the sequence is LPLSQEAGEV…PRCGVPDVAE (77 aa). Positions 88–95 match the Cysteine switch motif; the sequence is PRCGVPDV. Cys-90 lines the Zn(2+) pocket. Asp-156 contacts Ca(2+). Zn(2+) contacts are provided by His-166 and Asp-168. Ca(2+) contacts are provided by Asp-173, Gly-174, Gly-176, and Thr-178. His-181 lines the Zn(2+) pocket. Positions 188, 190, and 192 each coordinate Ca(2+). Residue His-194 coordinates Zn(2+). 2 residues coordinate Ca(2+): Asp-196 and Glu-199. His-217 is a Zn(2+) binding site. Glu-218 is a catalytic residue. Zn(2+)-binding residues include His-221 and His-227.

Belongs to the peptidase M10A family. Requires Ca(2+) as cofactor. The cofactor is Zn(2+).

It is found in the secreted. Its subcellular location is the extracellular space. It localises to the extracellular matrix. The enzyme catalyses Cleavage of 14-Ala-|-Leu-15 and 16-Tyr-|-Leu-17 in B chain of insulin. No action on collagen types I, II, IV, V. Cleaves gelatin chain alpha2(I) &gt; alpha1(I).. Its function is as follows. Degrades casein, gelatins of types I, III, IV, and V, and fibronectin. Activates procollagenase. The polypeptide is Matrilysin (Mmp7) (Rattus norvegicus (Rat)).